A 209-amino-acid polypeptide reads, in one-letter code: Thiamine-phosphate synthase (209 aa).

4-amino-2-methyl-5-(diphosphooxymethyl)pyrimidine is bound by residues 38 to 42 (QYRAK) and N70. The Mg(2+) site is built by D71 and D90. S109 contacts 4-amino-2-methyl-5-(diphosphooxymethyl)pyrimidine. Position 135–137 (135–137 (TST)) interacts with 2-[(2R,5Z)-2-carboxy-4-methylthiazol-5(2H)-ylidene]ethyl phosphate. K138 contributes to the 4-amino-2-methyl-5-(diphosphooxymethyl)pyrimidine binding site. Residues G165 and 185-186 (VS) each bind 2-[(2R,5Z)-2-carboxy-4-methylthiazol-5(2H)-ylidene]ethyl phosphate.

It belongs to the thiamine-phosphate synthase family. Requires Mg(2+) as cofactor.

It catalyses the reaction 2-[(2R,5Z)-2-carboxy-4-methylthiazol-5(2H)-ylidene]ethyl phosphate + 4-amino-2-methyl-5-(diphosphooxymethyl)pyrimidine + 2 H(+) = thiamine phosphate + CO2 + diphosphate. The enzyme catalyses 2-(2-carboxy-4-methylthiazol-5-yl)ethyl phosphate + 4-amino-2-methyl-5-(diphosphooxymethyl)pyrimidine + 2 H(+) = thiamine phosphate + CO2 + diphosphate. It carries out the reaction 4-methyl-5-(2-phosphooxyethyl)-thiazole + 4-amino-2-methyl-5-(diphosphooxymethyl)pyrimidine + H(+) = thiamine phosphate + diphosphate. The protein operates within cofactor biosynthesis; thiamine diphosphate biosynthesis; thiamine phosphate from 4-amino-2-methyl-5-diphosphomethylpyrimidine and 4-methyl-5-(2-phosphoethyl)-thiazole: step 1/1. Its function is as follows. Condenses 4-methyl-5-(beta-hydroxyethyl)thiazole monophosphate (THZ-P) and 2-methyl-4-amino-5-hydroxymethyl pyrimidine pyrophosphate (HMP-PP) to form thiamine monophosphate (TMP). This chain is Thiamine-phosphate synthase, found in Persephonella marina (strain DSM 14350 / EX-H1).